The chain runs to 219 residues: Small ribosomal subunit protein uS5 (219 aa).

The span at Met1–Ala21 shows a compositional bias: polar residues. Residues Met1–Ala61 form a disordered region. Residues Gly35–Gly47 show a composition bias toward basic and acidic residues. The region spanning Phe66–Ile129 is the S5 DRBM domain.

This sequence belongs to the universal ribosomal protein uS5 family. Part of the 30S ribosomal subunit. Contacts proteins S4 and S8.

Its function is as follows. With S4 and S12 plays an important role in translational accuracy. Functionally, located at the back of the 30S subunit body where it stabilizes the conformation of the head with respect to the body. This chain is Small ribosomal subunit protein uS5, found in Mycoplasma pneumoniae (strain ATCC 29342 / M129 / Subtype 1) (Mycoplasmoides pneumoniae).